A 103-amino-acid polypeptide reads, in one-letter code: OMEGA-ectatommitoxin(02)-Rm1d (103 aa).

The first 30 residues, 1–30 (MKDSYISIVIAYLMVTFILVSSMPIEGEKR), serve as a signal peptide directing secretion. 3 cysteine pairs are disulfide-bonded: Cys39-Cys54, Cys49-Cys70, and Cys72-Cys81. An EGF-like domain is found at 43–82 (LNDENYCFNGKCVHLVAQDEPGKPYYSCICDEFYIGERCG).

Belongs to the EGF domain peptide family. Expressed by the venom gland.

The protein localises to the secreted. Functionally, ant peptide with probable defensive activity which acts as a potent agonist of the mammalian epidermal growth factor receptor (EGFR). Mimics, both structurally and functionally, vertebrate epidermal growth factor (EGF) peptide hormones. In vivo, intraplantar injection in mice causes long-lasting (several days) hypersensitivity of the injected paw to both mechanical and thermal stimuli. Its long-lasting effect is unusual for venom toxins whose effects are usually immediate. One possible explanation is that it would reduce the duration of a nest attack, discourage future attacks, or enhance the actions of subsequent exposure to other pain-inducing venom peptides. The sequence is that of OMEGA-ectatommitoxin(02)-Rm1d from Rhytidoponera metallica (Australian green-headed ant).